A 778-amino-acid chain; its full sequence is Tastin (778 aa).

The segment covering 1 to 11 has biased composition (basic and acidic residues); that stretch reads MTTRQATKDPL. Residues 1–115 are disordered; that stretch reads MTTRQATKDP…PGPPAQTEAP (115 aa). Phosphoserine occurs at positions 16, 98, and 170. Residues 212–244 form a disordered region; sequence ISPSGPSFHPSTRPSFQELRRETAGSSRTSVSQ. Polar residues predominate over residues 235-244; that stretch reads AGSSRTSVSQ. Residues Ser324, Ser334, Ser344, and Ser362 each carry the phosphoserine modification. At Thr363 the chain carries Phosphothreonine. Ser376 is modified (phosphoserine). Disordered stretches follow at residues 406-425, 508-587, and 600-641; these read EGSGKPPVATPSGPHSNRTP, ECGE…AEPR, and PESS…RVEL. Positions 513–523 are enriched in pro residues; that stretch reads QPCPPAEPGPP. 4 tandem repeats follow at residues 516–548, 549–581, 582–614, and 615–647. The 4 X 33 AA approximate tandem repeats stretch occupies residues 516–647; that stretch reads PPAEPGPPEA…RVELGASEPC (132 aa). The span at 560-574 shows a compositional bias: basic and acidic residues; that stretch reads CRSEPEIPESSRQEQ. Positions 612–622 are enriched in pro residues; it reads EPCPPAEPGPL.

In terms of assembly, directly binds bystin, and indirectly trophinin. As to expression, strong expression at implantation sites. Was exclusively localized to the apical side of the syncytiotrophoblast. Also found in macrophages.

The protein localises to the cytoplasm. In terms of biological role, could be involved with bystin and trophinin in a cell adhesion molecule complex that mediates an initial attachment of the blastocyst to uterine epithelial cells at the time of the embryo implantation. The polypeptide is Tastin (TROAP) (Homo sapiens (Human)).